Reading from the N-terminus, the 62-residue chain is Endoregulin (62 aa).

Residues 25–45 (LAVIILFITAVLLLILFAIVF) traverse the membrane as a helical segment.

As to quaternary structure, homooligomer. Can also form heterooligomers with other sarcoplasmic/endoplasmic reticulum calcium ATPase (SERCA) regulators ARLN, PLN, SLN and STRIT1/DWORF. Monomer. Interacts as a monomer with ATP2A2/SERCA2; the interaction results in inhibition of ATP2A2 Ca(2+) affinity.

The protein localises to the endoplasmic reticulum membrane. Functionally, inhibits the activity of the calcium ATPases ATP2A2/SERCA2 and ATP2A3/SERCA3 by decreasing their apparent affinity for Ca(2+). The polypeptide is Endoregulin (Homo sapiens (Human)).